The sequence spans 380 residues: Cytochrome b (380 aa).

4 consecutive transmembrane segments (helical) span residues 34–54 (FGSL…LLAT), 78–99 (WLIR…YLHI), 114–134 (WNTG…GYVL), and 179–199 (FFAL…IHLT). The heme b site is built by His84 and His98. Residues His183 and His197 each contribute to the heme b site. An a ubiquinone-binding site is contributed by His202. 4 helical membrane-spanning segments follow: residues 227–247 (LKDI…ALFS), 289–309 (LGGV…PLLH), 321–341 (LSQL…WVGS), and 348–368 (FIII…LLFP).

This sequence belongs to the cytochrome b family. In terms of assembly, the cytochrome bc1 complex contains 11 subunits: 3 respiratory subunits (MT-CYB, CYC1 and UQCRFS1), 2 core proteins (UQCRC1 and UQCRC2) and 6 low-molecular weight proteins (UQCRH/QCR6, UQCRB/QCR7, UQCRQ/QCR8, UQCR10/QCR9, UQCR11/QCR10 and a cleavage product of UQCRFS1). This cytochrome bc1 complex then forms a dimer. The cofactor is heme b.

It is found in the mitochondrion inner membrane. Functionally, component of the ubiquinol-cytochrome c reductase complex (complex III or cytochrome b-c1 complex) that is part of the mitochondrial respiratory chain. The b-c1 complex mediates electron transfer from ubiquinol to cytochrome c. Contributes to the generation of a proton gradient across the mitochondrial membrane that is then used for ATP synthesis. This is Cytochrome b (MT-CYB) from Uria aalge (Common mure).